The primary structure comprises 710 residues: Conserved oligomeric Golgi complex subunit 2 (710 aa).

Belongs to the COG2 family. Component of the conserved oligomeric Golgi complex which is composed of eight different subunits and is required for normal Golgi morphology and localization.

It localises to the golgi apparatus membrane. Its function is as follows. Required for normal Golgi morphology and function. The chain is Conserved oligomeric Golgi complex subunit 2 from Drosophila melanogaster (Fruit fly).